Reading from the N-terminus, the 249-residue chain is Large ribosomal subunit protein uL4 (249 aa).

The protein belongs to the universal ribosomal protein uL4 family. In terms of assembly, part of the 50S ribosomal subunit.

In terms of biological role, one of the primary rRNA binding proteins, this protein initially binds near the 5'-end of the 23S rRNA. It is important during the early stages of 50S assembly. It makes multiple contacts with different domains of the 23S rRNA in the assembled 50S subunit and ribosome. Its function is as follows. Forms part of the polypeptide exit tunnel. The protein is Large ribosomal subunit protein uL4 of Methanospirillum hungatei JF-1 (strain ATCC 27890 / DSM 864 / NBRC 100397 / JF-1).